A 251-amino-acid polypeptide reads, in one-letter code: Probable transcriptional regulatory protein MRA_2631 (251 aa).

This sequence belongs to the TACO1 family.

It localises to the cytoplasm. The chain is Probable transcriptional regulatory protein MRA_2631 from Mycobacterium tuberculosis (strain ATCC 25177 / H37Ra).